We begin with the raw amino-acid sequence, 282 residues long: MAAVVFSLRRSGPVLRLSGALQVSRGAQTAAAPASQAAARIKKFAIYRWDPDKPGDKPRMQTYEVDLNTCGPMVLDALIKIKNEVDPTLTFRRSCREGICGSCAMNINGGNTLACTVRIDTNLSKVSKIYPLPHMYVVKDLVPDLSNFYAQYKSIEPYLKKKDKSQQGKEQYLQSIEDRDKLDGLYECILCACCSTSCPSYWWNADKYLGPAVLMQAYRWMIDSRDDFTEERLSKLQDPFSLYRCHTIMNCTRTCPKGLNPGKAIAEIKKMMAMYKERAVSA.

A mitochondrion-targeting transit peptide spans 1-26 (MAAVVFSLRRSGPVLRLSGALQVSRG). One can recognise a 2Fe-2S ferredoxin-type domain in the interval 42 to 135 (KKFAIYRWDP…VSKIYPLPHM (94 aa)). [2Fe-2S] cluster contacts are provided by C95, C100, C103, and C115. The 4Fe-4S ferredoxin-type domain maps to 178–208 (DRDKLDGLYECILCACCSTSCPSYWWNADKY). Positions 188, 191, and 194 each coordinate [4Fe-4S] cluster. C198 is a binding site for [3Fe-4S] cluster. A ubiquinone is bound at residue W203. 2 residues coordinate [3Fe-4S] cluster: C245 and C251. A [4Fe-4S] cluster-binding site is contributed by C255.

Belongs to the succinate dehydrogenase/fumarate reductase iron-sulfur protein family. In terms of assembly, component of complex II composed of four subunits: the flavoprotein (FP) sdha, iron-sulfur protein (IP) sdhb, and a cytochrome b composed of sdhc and sdhd. [2Fe-2S] cluster serves as cofactor. The cofactor is [3Fe-4S] cluster. Requires [4Fe-4S] cluster as cofactor.

The protein localises to the mitochondrion inner membrane. It carries out the reaction a quinone + succinate = fumarate + a quinol. It catalyses the reaction (R)-malate + a quinone = enol-oxaloacetate + a quinol. The enzyme catalyses (S)-malate + a quinone = enol-oxaloacetate + a quinol. It functions in the pathway carbohydrate metabolism; tricarboxylic acid cycle; fumarate from succinate (eukaryal route): step 1/1. Its activity is regulated as follows. Enol-oxaloacetate inhibits the succinate dehydrogenase activity. Its function is as follows. Iron-sulfur protein (IP) subunit of the succinate dehydrogenase complex (mitochondrial respiratory chain complex II), responsible for transferring electrons from succinate to ubiquinone (coenzyme Q). SDH also oxidizes malate to the non-canonical enol form of oxaloacetate, enol-oxaloacetate. Enol-oxaloacetate, which is a potent inhibitor of the succinate dehydrogenase activity, is further isomerized into keto-oxaloacetate. This Xenopus laevis (African clawed frog) protein is Succinate dehydrogenase [ubiquinone] iron-sulfur subunit, mitochondrial (sdhb).